A 219-amino-acid chain; its full sequence is Ribose-5-phosphate isomerase A (219 aa).

Substrate-binding positions include 28–31 (TGST), 81–84 (DGAD), and 94–97 (KGGG). Glu103 functions as the Proton acceptor in the catalytic mechanism. Residue Lys121 coordinates substrate.

This sequence belongs to the ribose 5-phosphate isomerase family. As to quaternary structure, homodimer.

The enzyme catalyses aldehydo-D-ribose 5-phosphate = D-ribulose 5-phosphate. The protein operates within carbohydrate degradation; pentose phosphate pathway; D-ribose 5-phosphate from D-ribulose 5-phosphate (non-oxidative stage): step 1/1. Its function is as follows. Catalyzes the reversible conversion of ribose-5-phosphate to ribulose 5-phosphate. The sequence is that of Ribose-5-phosphate isomerase A from Shigella boydii serotype 18 (strain CDC 3083-94 / BS512).